The sequence spans 48 residues: Small, acid-soluble spore protein P (48 aa).

A compositionally biased stretch (basic and acidic residues) spans 1–12; that stretch reads MTNKNTSKDMHK. The disordered stretch occupies residues 1–48; the sequence is MTNKNTSKDMHKNAPKGHNPGQPEPLSGSKKVKNRNHTRQKHNTSHDM. Residues 30–48 show a composition bias toward basic residues; sequence KKVKNRNHTRQKHNTSHDM.

It belongs to the SspP family.

It localises to the spore core. The protein is Small, acid-soluble spore protein P of Bacillus velezensis (strain DSM 23117 / BGSC 10A6 / LMG 26770 / FZB42) (Bacillus amyloliquefaciens subsp. plantarum).